The chain runs to 365 residues: Zinc finger TRAF-type-containing protein 1-B (365 aa).

Positions 1–56 (MSEEREAPGPLASSSAGLGAEVGQEEVPGGAGPARLLLLPSDSDGPPKKRLRSEAE) are disordered. The segment at 72 to 117 (CAVCLDLPKASVYQCTNGHLMCAGCFIHLLADARLKEEQATCPNCR) adopts an RING-type; degenerate zinc-finger fold. The TRAF-type zinc-finger motif lies at 113–186 (CPNCRCEISK…PWQGPYHELT (74 aa)).

This sequence belongs to the ZFTRAF1 family. Interacts with LGALS3.

The protein resides in the cytoplasm. The sequence is that of Zinc finger TRAF-type-containing protein 1-B from Xenopus laevis (African clawed frog).